Consider the following 218-residue polypeptide: Probable transaldolase (218 aa).

The Schiff-base intermediate with substrate role is filled by K83.

This sequence belongs to the transaldolase family. Type 3B subfamily.

It is found in the cytoplasm. It catalyses the reaction D-sedoheptulose 7-phosphate + D-glyceraldehyde 3-phosphate = D-erythrose 4-phosphate + beta-D-fructose 6-phosphate. The protein operates within carbohydrate degradation; pentose phosphate pathway; D-glyceraldehyde 3-phosphate and beta-D-fructose 6-phosphate from D-ribose 5-phosphate and D-xylulose 5-phosphate (non-oxidative stage): step 2/3. Its function is as follows. Transaldolase is important for the balance of metabolites in the pentose-phosphate pathway. The sequence is that of Probable transaldolase from Thermotoga sp. (strain RQ2).